The chain runs to 183 residues: Inner membrane-spanning protein YciB (183 aa).

Transmembrane regions (helical) follow at residues 19–39 (LYGV…QLIV), 53–73 (IMGI…DLNF), 76–96 (WKVT…QFVF), 121–141 (LGWA…SYYF), and 151–171 (TFGF…YLYP).

The protein belongs to the YciB family.

It localises to the cell inner membrane. Plays a role in cell envelope biogenesis, maintenance of cell envelope integrity and membrane homeostasis. This chain is Inner membrane-spanning protein YciB, found in Actinobacillus pleuropneumoniae serotype 3 (strain JL03).